We begin with the raw amino-acid sequence, 344 residues long: GDSL esterase/lipase At1g73610 (344 aa).

The signal sequence occupies residues 1-24; that stretch reads MNCLMFFKMLLAFSFISLFYVGNA. A glycan (N-linked (GlcNAc...) asparagine) is linked at Asn-30. The active-site Nucleophile is Ser-42. Catalysis depends on residues Asp-319 and His-322.

The protein belongs to the 'GDSL' lipolytic enzyme family.

The protein resides in the secreted. The polypeptide is GDSL esterase/lipase At1g73610 (Arabidopsis thaliana (Mouse-ear cress)).